The sequence spans 375 residues: 4,4'-diaponeurosporenoate glycosyltransferase (375 aa).

The next 4 helical transmembrane spans lie at 3–23 (WLSR…ALIF), 164–184 (FYEG…NVFS), 277–297 (IMTA…GLCL), and 330–350 (FSNL…KIFI).

It belongs to the glycosyltransferase 2 family. CrtQ subfamily.

The protein localises to the cell membrane. It participates in carotenoid biosynthesis; staphyloxanthin biosynthesis; staphyloxanthin from farnesyl diphosphate: step 4/5. Catalyzes the glycosylation of 4,4'-diaponeurosporenoate, i.e. the esterification of glucose at the C1'' position with the carboxyl group of 4,4'-diaponeurosporenic acid, to form glycosyl-4,4'-diaponeurosporenoate. This is a step in the biosynthesis of staphyloxanthin, an orange pigment present in most staphylococci strains. The chain is 4,4'-diaponeurosporenoate glycosyltransferase (crtQ) from Staphylococcus aureus (strain Mu50 / ATCC 700699).